Reading from the N-terminus, the 200-residue chain is 3-isopropylmalate dehydratase small subunit (200 aa).

The protein belongs to the LeuD family. LeuD type 1 subfamily. Heterodimer of LeuC and LeuD.

The enzyme catalyses (2R,3S)-3-isopropylmalate = (2S)-2-isopropylmalate. It participates in amino-acid biosynthesis; L-leucine biosynthesis; L-leucine from 3-methyl-2-oxobutanoate: step 2/4. Catalyzes the isomerization between 2-isopropylmalate and 3-isopropylmalate, via the formation of 2-isopropylmaleate. This chain is 3-isopropylmalate dehydratase small subunit, found in Edwardsiella ictaluri (strain 93-146).